The chain runs to 373 residues: 3 beta-hydroxysteroid dehydrogenase/Delta 5--&gt;4-isomerase type 2 (373 aa).

The active-site Proton acceptor is Tyr-155. Lys-159 is an NAD(+) binding site. A helical membrane pass occupies residues 288 to 308 (LPLLYWLAFLLETVSFLLRPF).

This sequence belongs to the 3-beta-HSD family. As to expression, adrenal glands, testes and ovaries.

The protein resides in the endoplasmic reticulum membrane. Its subcellular location is the mitochondrion membrane. The catalysed reaction is a 3beta-hydroxy-Delta(5)-steroid + NAD(+) = a 3-oxo-Delta(5)-steroid + NADH + H(+). It catalyses the reaction a 3-oxo-Delta(5)-steroid = a 3-oxo-Delta(4)-steroid. It participates in lipid metabolism; steroid biosynthesis. Its function is as follows. 3-beta-HSD is a bifunctional enzyme, that catalyzes the oxidative conversion of Delta(5)-ene-3-beta-hydroxy steroid, and the oxidative conversion of ketosteroids. The 3-beta-HSD enzymatic system plays a crucial role in the biosynthesis of all classes of hormonal steroids. The chain is 3 beta-hydroxysteroid dehydrogenase/Delta 5--&gt;4-isomerase type 2 (Hsd3b) from Rattus norvegicus (Rat).